Here is a 327-residue protein sequence, read N- to C-terminus: MFNDIPVFDYEDIQLIPNKCIITSRSQADTSVTLGKYQFKLPVIPANMQTIIDETIAEQLAKEGYFYIMHRFDEDSRKPFIKRMHEQGLIASISVGVKACEYDFVTSLKEDAPEFITIDIAHGHANSVIDMIKHIKTELPETFVIAGNVGTPEAVRELENAGADATKVGIGPGKVCITKVKTGFGTGGWQLAALRWCAKAARKPIIADGGIRTHGDIAKSIRFGASMVMIGSLFAGHIESPGKTVEVDGETFKEYYGSASEYQKGEHKNVEGKKILLPTKGHLSDTLTEMQQDLQSSISYAGGKDLDSLRHVDYVIVKNSIWNGDSI.

Catalysis depends on cysteine 176, which acts as the Thioimidate intermediate. Position 205-228 (205-228) interacts with NADP(+); it reads IIADGGIRTHGDIAKSIRFGASMV.

Belongs to the IMPDH/GMPR family. GuaC type 2 subfamily.

It carries out the reaction IMP + NH4(+) + NADP(+) = GMP + NADPH + 2 H(+). Its function is as follows. Catalyzes the irreversible NADPH-dependent deamination of GMP to IMP. It functions in the conversion of nucleobase, nucleoside and nucleotide derivatives of G to A nucleotides, and in maintaining the intracellular balance of A and G nucleotides. This is GMP reductase from Streptococcus pyogenes serotype M49 (strain NZ131).